The following is a 127-amino-acid chain: Probable soluble cytochrome b562 1 (127 aa).

The signal sequence occupies residues 1 to 21 (MRKIPIIAGVFSLLITSCTFA). Residues Met-28 and His-123 each contribute to the heme b site.

This sequence belongs to the cytochrome b562 family. Heme b is required as a cofactor.

It localises to the periplasm. In terms of biological role, electron-transport protein of unknown function. In Yersinia pestis, this protein is Probable soluble cytochrome b562 1 (cybC1).